A 452-amino-acid chain; its full sequence is Bifunctional protein GlmU (452 aa).

A pyrophosphorylase region spans residues M1–R231. UDP-N-acetyl-alpha-D-glucosamine is bound by residues L10 to G13, K24, Q77, G82 to T83, Y105 to D107, G143, E157, N172, and N229. A Mg(2+)-binding site is contributed by D107. Residue N229 coordinates Mg(2+). The interval A232 to S252 is linker. The N-acetyltransferase stretch occupies residues G253–V452. UDP-N-acetyl-alpha-D-glucosamine is bound by residues R318 and K336. The Proton acceptor role is filled by H348. Y351 and N362 together coordinate UDP-N-acetyl-alpha-D-glucosamine. Acetyl-CoA-binding positions include A365, N371 to Y372, S390, S408, and R425.

The protein in the N-terminal section; belongs to the N-acetylglucosamine-1-phosphate uridyltransferase family. In the C-terminal section; belongs to the transferase hexapeptide repeat family. In terms of assembly, homotrimer. Requires Mg(2+) as cofactor.

The protein localises to the cytoplasm. The enzyme catalyses alpha-D-glucosamine 1-phosphate + acetyl-CoA = N-acetyl-alpha-D-glucosamine 1-phosphate + CoA + H(+). It carries out the reaction N-acetyl-alpha-D-glucosamine 1-phosphate + UTP + H(+) = UDP-N-acetyl-alpha-D-glucosamine + diphosphate. It participates in nucleotide-sugar biosynthesis; UDP-N-acetyl-alpha-D-glucosamine biosynthesis; N-acetyl-alpha-D-glucosamine 1-phosphate from alpha-D-glucosamine 6-phosphate (route II): step 2/2. It functions in the pathway nucleotide-sugar biosynthesis; UDP-N-acetyl-alpha-D-glucosamine biosynthesis; UDP-N-acetyl-alpha-D-glucosamine from N-acetyl-alpha-D-glucosamine 1-phosphate: step 1/1. Its pathway is bacterial outer membrane biogenesis; LPS lipid A biosynthesis. In terms of biological role, catalyzes the last two sequential reactions in the de novo biosynthetic pathway for UDP-N-acetylglucosamine (UDP-GlcNAc). The C-terminal domain catalyzes the transfer of acetyl group from acetyl coenzyme A to glucosamine-1-phosphate (GlcN-1-P) to produce N-acetylglucosamine-1-phosphate (GlcNAc-1-P), which is converted into UDP-GlcNAc by the transfer of uridine 5-monophosphate (from uridine 5-triphosphate), a reaction catalyzed by the N-terminal domain. The chain is Bifunctional protein GlmU from Allorhizobium ampelinum (strain ATCC BAA-846 / DSM 112012 / S4) (Agrobacterium vitis (strain S4)).